The following is a 172-amino-acid chain: Co-chaperone protein HscB (172 aa).

Residues 2–74 (DYFTLFGLPI…LKRAEYMLSL (73 aa)) form the J domain.

This sequence belongs to the HscB family. Interacts with HscA and stimulates its ATPase activity. Interacts with IscU.

Co-chaperone involved in the maturation of iron-sulfur cluster-containing proteins. Seems to help targeting proteins to be folded toward HscA. The polypeptide is Co-chaperone protein HscB (Pectobacterium carotovorum subsp. carotovorum (strain PC1)).